The sequence spans 1073 residues: TSC22 domain family protein 1 (1073 aa).

The tract at residues 1–98 (MHQPPESTAA…SQAQLQAQPL (98 aa)) is required for interaction with TGFBR1 and promotion of TGF-beta signaling. 6 disordered regions span residues 22–110 (MAHP…KKSG), 125–205 (ISSN…PHLP), 220–288 (LHHH…SPAS), 458–486 (VTSERESTSGSSVSSSVSTLSHYTESVGS), 607–628 (YSQAAPPVQTPLPGAPPPQQLQ), and 742–766 (VQQPSTQVPPSVIQQGAPPSSQVVP). Low complexity predominate over residues 36–45 (GSASALNAAG). The span at 58–70 (FPPPSLLQPPPPA) shows a compositional bias: pro residues. The span at 84–100 (SLNLLSQAQLQAQPLAP) shows a compositional bias: low complexity. The segment covering 133–142 (EDTESYDDLD) has biased composition (acidic residues). Over residues 220–240 (LHHHHQIHHGHHLQHGHHHPS) the composition is skewed to basic residues. Residues 257–271 (PVSRKLSTTGSSDSI) show a composition bias toward polar residues. Serine 263 carries the phosphoserine modification. Low complexity-rich tracts occupy residues 272-288 (TPVAPTSAVSSSGSPAS) and 465-483 (TSGSSVSSSVSTLSHYTES). The span at 614–625 (VQTPLPGAPPPQ) shows a compositional bias: pro residues. Over residues 742-764 (VQQPSTQVPPSVIQQGAPPSSQV) the composition is skewed to polar residues. Residues 1006-1027 (LKEQIKELIEKNSQLEQENNLL) form a leucine-zipper region. A disordered region spans residues 1037 to 1073 (AQFQAQLQTGSPPATTQPQGTTQPPAQPASQGSGPTA). The span at 1044–1073 (QTGSPPATTQPQGTTQPPAQPASQGSGPTA) shows a compositional bias: low complexity.

This sequence belongs to the TSC-22/Dip/Bun family. As to quaternary structure, forms homodimers. Forms heterodimers. Component of a complex composed of TSC22D1 (via N-terminus), TGFBR1 and TGFBR2; the interaction between TSC22D1 and TGFBR1 is inhibited by SMAD7 and promoted by TGFB1. Interacts with SMAD7; the interaction requires TGF-beta and the interaction is inhibited by TGFBR1. Interacts with TPT1/fortilin; interaction results in the destabilization of TSC22D1 protein and prevents TSC22D1-mediated apoptosis. Interacts with SMAD4 (via N-terminus). Interacts with ACVRL1/ALK1, ACVR1/ALK2, BMPR1A/ALK3, ACVR1B/ALK4, BMPR1B/ALK6, ACVR2A/ACTRII, and BMPR2. Interacts with SMAD6. Interacts with TFE3; the interaction is enhanced in the presence of TGF-beta. Forms a heterodimer with TSC22D4/THG1. In terms of assembly, forms a heterodimer with TSC22D4/THG1. Interacts with histone H1-2. Interacts with GNL3. As to quaternary structure, interacts with histone H1-2. As to expression, ubiquitously expressed in adult tissues. Expressed in the postmitotic epithelial compartment at the top of intestinal mucosal villi.

The protein resides in the cytoplasm. It localises to the nucleus. The protein localises to the cell membrane. Its subcellular location is the mitochondrion. Its function is as follows. Transcriptional repressor. Acts on the C-type natriuretic peptide (CNP) promoter. Acts to promote CASP3-mediated apoptosis. Positively regulates TGF-beta signaling by interacting with SMAD7 which inhibits binding of SMAD7 to TGFBR1, preventing recruitment of SMURF ubiquitin ligases to TGFBR1 and inhibiting SMURF-mediated ubiquitination and degradation of TGFBR1. Contributes to enhancement of TGF-beta signaling by binding to and modulating the transcription activator activity of SMAD4. Promotes TGF-beta-induced transcription of COL1A2; via its interaction with TFE3 at E-boxes in the gene proximal promoter. Plays a role in the repression of hematopoietic precursor cell growth. Promotes IL2 deprivation-induced apoptosis in T-lymphocytes, via repression of TSC22D3/GILZ transcription and activation of the caspase cascade. In terms of biological role, may act to negatively regulate TGFB3 signaling and thereby inhibit cell death in mammary gland cells. Functionally, positively regulates cell death in response to TGFB3 during mammary gland involution. The polypeptide is TSC22 domain family protein 1 (Homo sapiens (Human)).